The sequence spans 458 residues: MTSPAKFKKDKEIIAEYDTQVKEIRAQLTEQMKCLDQQCELRVQLLQDLQDFFRKKAEIEMDYSRNLEKLAERFLAKTCSTKDQQFKKDQNVLSPVNCWNLLLNQVKRESRDHTTLSDIYLNNIIPRFVQVSEDSGRLFKKSKEVGQQLQDDLMKVLNELYSVMKTYHMYNADSISAQSKLKEAEKQEEKQIGKSVKQEDRQTPRSPDSTANVRIEEKHVRRSSVKKIEKMKEKRQAKYTENKLKAIKARNEYLLALEATNASVFKYYIHDLSDLIDCCDLGYHASLNRALRTFLSAELNLEQSKHEGLDAIENAVENLDATSDKQRLMEMYNNVFCPPMKFEFQPHMGDMASQLCAQQPVQSELLQRCQQLQSRLSTLKIENEEVKKTMEATLQTIQDIVTVEDFDVSDCFQYSNSMESVKSTVSETFMSKPSIAKRRANQQETEQFYFTVRECYGF.

The F-BAR domain occupies 22-324 (KEIRAQLTEQ…AVENLDATSD (303 aa)). The segment covering 181–203 (LKEAEKQEEKQIGKSVKQEDRQT) has biased composition (basic and acidic residues). Residues 181 to 214 (LKEAEKQEEKQIGKSVKQEDRQTPRSPDSTANVR) form a disordered region. Positions 362 to 400 (QSELLQRCQQLQSRLSTLKIENEEVKKTMEATLQTIQDI) form a coiled coil.

May interact with SRGAP2; formation of the heterodimer alters SRGAP2 function.

Functionally, may regulate cell migration and differentiation through interaction with and inhibition of SRGAP2. In contrast to SRGAP2C, it is not able to induce long-lasting changes in synaptic density throughout adulthood. The sequence is that of SLIT-ROBO Rho GTPase-activating protein 2B (SRGAP2B) from Homo sapiens (Human).